A 331-amino-acid polypeptide reads, in one-letter code: Lipoate-protein ligase LplJ (331 aa).

In terms of domain architecture, BPL/LPL catalytic spans 27 to 214 (DPEQQYLLFY…HIFNTNDVGN (188 aa)). ATP is bound by residues Arg-69, 74–77 (GAVY), and Lys-131. (R)-lipoate is bound at residue Lys-131.

It belongs to the LplA family.

The protein resides in the cytoplasm. It carries out the reaction L-lysyl-[lipoyl-carrier protein] + (R)-lipoate + ATP = N(6)-[(R)-lipoyl]-L-lysyl-[lipoyl-carrier protein] + AMP + diphosphate + H(+). Its pathway is protein modification; protein lipoylation via exogenous pathway; protein N(6)-(lipoyl)lysine from lipoate: step 1/2. The protein operates within protein modification; protein lipoylation via exogenous pathway; protein N(6)-(lipoyl)lysine from lipoate: step 2/2. Its function is as follows. Catalyzes both the ATP-dependent activation of exogenously supplied lipoate to lipoyl-AMP and the transfer of the activated lipoyl onto the lipoyl domains of lipoate-dependent enzymes. Is also able to use octanoate as substrate. This chain is Lipoate-protein ligase LplJ (lplJ), found in Bacillus subtilis (strain 168).